We begin with the raw amino-acid sequence, 316 residues long: Cilia-and flagella-associated protein 96 (316 aa).

The disordered stretch occupies residues 220–242; the sequence is EEKKEVSFKPFKPSSPGKKAGGM. A compositionally biased stretch (low complexity) spans 227–237; that stretch reads FKPFKPSSPGK.

This sequence belongs to the CFAP96 family.

It is found in the cytoplasm. Its subcellular location is the cytoskeleton. The protein resides in the microtubule organizing center. The protein localises to the centrosome. This is Cilia-and flagella-associated protein 96 (Cfap96) from Mus musculus (Mouse).